The sequence spans 222 residues: Uracil-DNA glycosylase (222 aa).

Aspartate 66 acts as the Proton acceptor in catalysis.

Belongs to the uracil-DNA glycosylase (UDG) superfamily. UNG family.

The protein localises to the cytoplasm. It carries out the reaction Hydrolyzes single-stranded DNA or mismatched double-stranded DNA and polynucleotides, releasing free uracil.. Its function is as follows. Excises uracil residues from the DNA which can arise as a result of misincorporation of dUMP residues by DNA polymerase or due to deamination of cytosine. The polypeptide is Uracil-DNA glycosylase (Porphyromonas gingivalis (strain ATCC 33277 / DSM 20709 / CIP 103683 / JCM 12257 / NCTC 11834 / 2561)).